The primary structure comprises 446 residues: Signal recognition particle 54 kDa protein (446 aa).

GTP is bound by residues 104-111 (GLQGSGKT), 184-188 (DTAGR), and 242-245 (TKMD).

Belongs to the GTP-binding SRP family. SRP54 subfamily. As to quaternary structure, part of the signal recognition particle protein translocation system, which is composed of SRP and FtsY. Archaeal SRP consists of a 7S RNA molecule of 300 nucleotides and two protein subunits: SRP54 and SRP19.

It localises to the cytoplasm. It carries out the reaction GTP + H2O = GDP + phosphate + H(+). Functionally, involved in targeting and insertion of nascent membrane proteins into the cytoplasmic membrane. Binds to the hydrophobic signal sequence of the ribosome-nascent chain (RNC) as it emerges from the ribosomes. The SRP-RNC complex is then targeted to the cytoplasmic membrane where it interacts with the SRP receptor FtsY. The chain is Signal recognition particle 54 kDa protein from Methanocorpusculum labreanum (strain ATCC 43576 / DSM 4855 / Z).